A 101-amino-acid polypeptide reads, in one-letter code: Small ribosomal subunit protein uS14A (101 aa).

The interval 29-73 (AIISSPSTPADARAAAQSELNRQPRDASPVRVRNRDAVDGRPRGH) is disordered. The segment covering 61 to 70 (RNRDAVDGRP) has biased composition (basic and acidic residues).

This sequence belongs to the universal ribosomal protein uS14 family. As to quaternary structure, part of the 30S ribosomal subunit. Contacts proteins S3 and S10.

Its function is as follows. Binds 16S rRNA, required for the assembly of 30S particles and may also be responsible for determining the conformation of the 16S rRNA at the A site. The protein is Small ribosomal subunit protein uS14A of Mycolicibacterium gilvum (strain PYR-GCK) (Mycobacterium gilvum (strain PYR-GCK)).